The chain runs to 529 residues: HTH-type transcriptional activator Btr (529 aa).

The H-T-H motif DNA-binding region spans Leu-182 to Lys-201. The 261-residue stretch at Lys-268–Cys-528 folds into the Fe/B12 periplasmic-binding domain.

In terms of assembly, binds with high affinity to both apo-bacillibactin and iron-bacillibactin.

It localises to the cytoplasm. Its function is as follows. In iron-limited conditions, activates expression of the feuABCybbA operon, which encodes the bacillibactin uptake system. Acts by binding directly to a conserved direct repeat element upstream of the feuA promoter. Activity is increased in the presence of bacillibactin. The chain is HTH-type transcriptional activator Btr (btr) from Bacillus subtilis (strain 168).